A 435-amino-acid polypeptide reads, in one-letter code: GTPase Der (435 aa).

EngA-type G domains lie at 8–169 and 176–351; these read NLVA…NFEN and FKIA…NNLS. GTP contacts are provided by residues 14–21, 61–65, 123–126, 182–189, 229–233, and 294–297; these read GKPNVGKS, DTGGI, NKLD, GKPNAGKS, DTAGI, and NKWD. Positions 352-435 constitute a KH-like domain; it reads REIKQNLLND…PINLVLKKNK (84 aa).

The protein belongs to the TRAFAC class TrmE-Era-EngA-EngB-Septin-like GTPase superfamily. EngA (Der) GTPase family. Associates with the 50S ribosomal subunit.

GTPase that plays an essential role in the late steps of ribosome biogenesis. This is GTPase Der from Mycoplasmopsis pulmonis (strain UAB CTIP) (Mycoplasma pulmonis).